Consider the following 614-residue polypeptide: Bifunctional 3'-phosphoadenosine 5'-phosphosulfate synthase 2 (614 aa).

Residues 1-215 form an adenylyl-sulfate kinase region; it reads MSGIKKQKTE…VVELLQEQNI (215 aa). Residue 52–57 participates in ATP binding; the sequence is GAGKTT. Residues 79–82, Phe91, 96–99, 122–123, Lys161, and 174–175 contribute to the adenosine 5'-phosphosulfate site; these read DNVR, REEN, IS, and GF. ATP contacts are provided by residues Ser197, 409 to 412, 511 to 515, and Ala553; these read QLRN and GRDPA. A sulfate adenylyltransferase region spans residues 224 to 614; it reads IHELFVPENK…TDYYRSLEKN (391 aa).

The protein in the N-terminal section; belongs to the APS kinase family. It in the C-terminal section; belongs to the sulfate adenylyltransferase family. In terms of tissue distribution, expressed in cartilage and adrenal gland.

The enzyme catalyses sulfate + ATP + H(+) = adenosine 5'-phosphosulfate + diphosphate. It catalyses the reaction adenosine 5'-phosphosulfate + ATP = 3'-phosphoadenylyl sulfate + ADP + H(+). It functions in the pathway sulfur metabolism; sulfate assimilation. Its function is as follows. Bifunctional enzyme with both ATP sulfurylase and APS kinase activity, which mediates two steps in the sulfate activation pathway. The first step is the transfer of a sulfate group to ATP to yield adenosine 5'-phosphosulfate (APS), and the second step is the transfer of a phosphate group from ATP to APS yielding 3'-phosphoadenylylsulfate/PAPS, the activated sulfate donor used by sulfotransferases. In mammals, PAPS is the sole source of sulfate while APS appears to only be an intermediate in the sulfate-activation pathway. Plays indirectly an important role in skeletogenesis during postnatal growth. The chain is Bifunctional 3'-phosphoadenosine 5'-phosphosulfate synthase 2 (PAPSS2) from Homo sapiens (Human).